A 344-amino-acid chain; its full sequence is MSTSTAAPAPSLSDLCPAALRRPVAAALRALDPAPARLAVAVSGGADSAMLAVAAAAALPPGCTLRLFHVHHGLQAAADQWAAQVRGLGALLGVPVDEARVTVPPGQGLGMEAAARLARYQALAGLARQHGVRHILLAHHRNDQAETVLLRLLRGTGLQGMAAMAPLSERDGVAYLRPWLDVDRAAILALAGAVRAQCGWQAVQDPTNTDPRYARAAVRTQLAPALDARWPGWQAIVARHARQMAEAAEIVAEVARADFDTLEPADAGRSFSLAAWRGLSAARQAQALRHWLASQDAPMPTEARLAELQRQLRQLHALGHDRHLRWQHAGRVVRCERGRVWIDD.

43–48 is a binding site for ATP; it reads SGGADS.

The protein belongs to the tRNA(Ile)-lysidine synthase family.

The protein resides in the cytoplasm. It catalyses the reaction cytidine(34) in tRNA(Ile2) + L-lysine + ATP = lysidine(34) in tRNA(Ile2) + AMP + diphosphate + H(+). In terms of biological role, ligates lysine onto the cytidine present at position 34 of the AUA codon-specific tRNA(Ile) that contains the anticodon CAU, in an ATP-dependent manner. Cytidine is converted to lysidine, thus changing the amino acid specificity of the tRNA from methionine to isoleucine. The polypeptide is tRNA(Ile)-lysidine synthase (Bordetella bronchiseptica (strain ATCC BAA-588 / NCTC 13252 / RB50) (Alcaligenes bronchisepticus)).